The sequence spans 391 residues: NADH-quinone oxidoreductase subunit D (391 aa).

It belongs to the complex I 49 kDa subunit family. NDH-1 is composed of 14 different subunits. Subunits NuoB, C, D, E, F, and G constitute the peripheral sector of the complex.

The protein localises to the cell inner membrane. The enzyme catalyses a quinone + NADH + 5 H(+)(in) = a quinol + NAD(+) + 4 H(+)(out). Its function is as follows. NDH-1 shuttles electrons from NADH, via FMN and iron-sulfur (Fe-S) centers, to quinones in the respiratory chain. The immediate electron acceptor for the enzyme in this species is believed to be ubiquinone. Couples the redox reaction to proton translocation (for every two electrons transferred, four hydrogen ions are translocated across the cytoplasmic membrane), and thus conserves the redox energy in a proton gradient. This Rickettsia conorii (strain ATCC VR-613 / Malish 7) protein is NADH-quinone oxidoreductase subunit D.